Here is a 536-residue protein sequence, read N- to C-terminus: MALTSFLPAPTQLSQDQLEAEERARSQRSLQTSLVSSRREPPPYGYRKGWIPRLLEDFGDGGAFPEIHVAQYPLDMGRKKKMSNALAIQVDPEGKIKYDAIARQGQSKDKVIYSKYTDLVPKEVMNADDPDLQRPDEEAIKEITEKTRVALEKSVSQKVAAAMPVRAADKLAPAQYIRYTPSQQGVAFNSGAKQRVIRMVEMQKEPMEPPRFKINKKIPRGPPSPPAPVMHSPSRKMTVKEQQEWKIPPCISNWKNAKGYTIPIDKRLAADGRGLQTVHINENFAKLAEALYIADRKAREAVEMRAQVERKMAQKEKEKHEEKLREMAQKARERRAGIKTHVEKEDGEARERDEIRHDRRKERQHDRNLSRAAPDKRSKLQRNENRDISEVIALGVPNPRTSNEVQYDQRLFNQSKGMDSGFAGGEDEIYNVYDQAWRGGKDMAQSIYRPSKNLDKDMYGDDLEARIKTNRFVPDKEFSGSDRKQRGREGPVQFEEDPFGLDKFLEEAKQHGGSKRPSDSSRPKEHEHEGKKRRKE.

Positions 1 to 44 are disordered; sequence MALTSFLPAPTQLSQDQLEAEERARSQRSLQTSLVSSRREPPPY. Position 2 is an N-acetylalanine (alanine 2). Serine 14 carries the phosphoserine modification. The span at 27 to 36 shows a compositional bias: polar residues; the sequence is QRSLQTSLVS. Residues 59–79 form an interaction with PPIL1 region; the sequence is GDGGAFPEIHVAQYPLDMGRK. Glycyl lysine isopeptide (Lys-Gly) (interchain with G-Cter in SUMO2) cross-links involve residues lysine 81, lysine 97, lysine 115, lysine 122, lysine 141, lysine 158, and lysine 170. Residues 174–339 form an SNW region; sequence AQYIRYTPSQ…KARERRAGIK (166 aa). A phosphoserine mark is found at serine 182 and serine 190. Lysine 193 participates in a covalent cross-link: Glycyl lysine isopeptide (Lys-Gly) (interchain with G-Cter in SUMO2). The disordered stretch occupies residues 212–233; that stretch reads FKINKKIPRGPPSPPAPVMHSP. 3 positions are modified to phosphoserine: serine 224, serine 232, and serine 234. Glycyl lysine isopeptide (Lys-Gly) (interchain with G-Cter in SUMO2) cross-links involve residues lysine 240, lysine 258, lysine 286, lysine 339, lysine 344, lysine 416, and lysine 441. The disordered stretch occupies residues 311–386; that stretch reads KMAQKEKEKH…RSKLQRNENR (76 aa). Serine 446 bears the Phosphoserine mark. Lysine 452 is covalently cross-linked (Glycyl lysine isopeptide (Lys-Gly) (interchain with G-Cter in SUMO2)). 2 stretches are compositionally biased toward basic and acidic residues: residues 467-489 and 503-530; these read IKTN…RGRE and KFLE…EHEG. Residues 467–536 form a disordered region; that stretch reads IKTNRFVPDK…EHEGKKRRKE (70 aa). Phosphoserine occurs at positions 479 and 481. Lysine 509 participates in a covalent cross-link: Glycyl lysine isopeptide (Lys-Gly) (interchain with G-Cter in SUMO2).

Belongs to the SNW family. In terms of assembly, identified in the spliceosome C complex. Associates with U4/U6-U5 tri-small nuclear ribonucleoproteins (U4/U6-U5 tri-snRNPs). Component of the minor spliceosome, which splices U12-type introns. Interacts with SKI, SMAD2,SMAD3, RBPJ, RB1, PABPN1, MAGEA1, SIRT1, FOXN3, U2AF2, PPIL1, DAXX and ATP1B4. Interacts with VDR and RXRA; preferentially associates with VDR:RXRA heterodimers. Interacts with NCOR2. Interacts with MAML1. Interacts with NOTCH1 NICD; the interaction involves multimerized NOTCH1 NICD. Forms a complex with NOTCH1 NICD and MAML1; the association is dissociated by RBPJ. Associates with positive transcription elongation factor b (P-TEFb). Component of the SNARP complex which consists at least of SNIP1, SNW1, THRAP3, BCLAF1 and PNN.

It localises to the nucleus. In terms of biological role, involved in pre-mRNA splicing as component of the spliceosome. As a component of the minor spliceosome, involved in the splicing of U12-type introns in pre-mRNAs. Required in the specific splicing of CDKN1A pre-mRNA; the function probably involves the recruitment of U2AF2 to the mRNA. May recruit PPIL1 to the spliceosome. May be involved in cyclin-D1/CCND1 mRNA stability through the SNARP complex which associates with both the 3'end of the CCND1 gene and its mRNA. Involved in transcriptional regulation. Modulates TGF-beta-mediated transcription via association with SMAD proteins, MYOD1-mediated transcription via association with PABPN1, RB1-mediated transcriptional repression, and retinoid-X receptor (RXR)- and vitamin D receptor (VDR)-dependent gene transcription in a cell line-specific manner probably involving coactivators NCOA1 and GRIP1. Is involved in NOTCH1-mediated transcriptional activation. Binds to multimerized forms of Notch intracellular domain (NICD) and is proposed to recruit transcriptional coactivators such as MAML1 to form an intermediate preactivation complex which associates with DNA-bound CBF-1/RBPJ to form a transcriptional activation complex by releasing SNW1 and redundant NOTCH1 NICD. This Mus musculus (Mouse) protein is SNW domain-containing protein 1 (Snw1).